The following is a 116-amino-acid chain: Large ribosomal subunit protein uL22c (116 aa).

The protein belongs to the universal ribosomal protein uL22 family. In terms of assembly, part of the 50S ribosomal subunit.

The protein localises to the plastid. Its subcellular location is the chloroplast. Its function is as follows. This protein binds specifically to 23S rRNA. In terms of biological role, the globular domain of the protein is located near the polypeptide exit tunnel on the outside of the subunit, while an extended beta-hairpin is found that lines the wall of the exit tunnel in the center of the 70S ribosome. The chain is Large ribosomal subunit protein uL22c (rpl22) from Porphyra purpurea (Red seaweed).